A 374-amino-acid chain; its full sequence is Probable ethanolamine kinase (374 aa).

ATP-binding residues include arginine 93 and aspartate 252.

The protein belongs to the choline/ethanolamine kinase family.

It carries out the reaction ethanolamine + ATP = phosphoethanolamine + ADP + H(+). It functions in the pathway phospholipid metabolism; phosphatidylethanolamine biosynthesis; phosphatidylethanolamine from ethanolamine: step 1/3. Functionally, involved in phospholipid biosynthesis. Catalyzes the first step in phosphatidylethanolamine biosynthesis. The chain is Probable ethanolamine kinase (EMB1187) from Arabidopsis thaliana (Mouse-ear cress).